A 168-amino-acid polypeptide reads, in one-letter code: NADH-ubiquinone oxidoreductase chain 6 (168 aa).

The next 5 membrane-spanning stretches (helical) occupy residues 26 to 46 (LGLM…LIIF), 52 to 72 (LLFL…ISLI), 82 to 102 (VFAY…FVMK), 111 to 131 (SMSL…IMLY), and 134 to 154 (FFCY…VVKI).

It belongs to the complex I subunit 6 family.

It is found in the mitochondrion membrane. It carries out the reaction a ubiquinone + NADH + 5 H(+)(in) = a ubiquinol + NAD(+) + 4 H(+)(out). Core subunit of the mitochondrial membrane respiratory chain NADH dehydrogenase (Complex I) that is believed to belong to the minimal assembly required for catalysis. Complex I functions in the transfer of electrons from NADH to the respiratory chain. The immediate electron acceptor for the enzyme is believed to be ubiquinone. This is NADH-ubiquinone oxidoreductase chain 6 (ND6) from Heterololigo bleekeri (Spear squid).